The chain runs to 638 residues: Zinc finger protein 143 (638 aa).

M1 carries the post-translational modification N-acetylmethionine. A Glycyl lysine isopeptide (Lys-Gly) (interchain with G-Cter in SUMO2) cross-link involves residue K213. 4 consecutive C2H2-type zinc fingers follow at residues 237–261 (FRCE…ERSH), 267–291 (YQCE…VRTH), 297–321 (YRCS…IRTH), and 327–351 (FKCP…VRTH). T352 carries the post-translational modification Phosphothreonine. C2H2-type zinc fingers lie at residues 357–381 (YYCT…VRIH), 387–411 (YVCT…HVVH), and 417–440 (YNCN…RTAH). Residue K406 forms a Glycyl lysine isopeptide (Lys-Gly) (interchain with G-Cter in SUMO2) linkage.

Belongs to the GLI C2H2-type zinc-finger protein family. As to quaternary structure, interacts with CHD8. Forms a complex with HCFC1 and ZNF143. As to expression, expressed in all tissues tested, with the strongest expression in ovary.

It localises to the nucleus. In terms of biological role, transcriptional activator. Activates the gene for selenocysteine tRNA (tRNAsec). Binds to the SPH motif of small nuclear RNA (snRNA) gene promoters. Participates in efficient U6 RNA polymerase III transcription via its interaction with CHD8. In complex with HCFC1 and ZNF143, regulates the expression of several genes, including AP2S1, ESCO2, OPHN1, RBL1, UBXN8 and ZNF32. This chain is Zinc finger protein 143 (ZNF143), found in Homo sapiens (Human).